Here is a 147-residue protein sequence, read N- to C-terminus: Cyanate hydratase (147 aa).

Residues arginine 88, glutamate 91, and serine 114 contribute to the active site.

This sequence belongs to the cyanase family.

It carries out the reaction cyanate + hydrogencarbonate + 3 H(+) = NH4(+) + 2 CO2. In terms of biological role, catalyzes the reaction of cyanate with bicarbonate to produce ammonia and carbon dioxide. The sequence is that of Cyanate hydratase from Ralstonia pickettii (strain 12J).